Reading from the N-terminus, the 266-residue chain is UPF0294 protein Ent638_0743 (266 aa).

It belongs to the UPF0294 family.

It localises to the cytoplasm. This is UPF0294 protein Ent638_0743 from Enterobacter sp. (strain 638).